We begin with the raw amino-acid sequence, 154 residues long: Ribonuclease 8 (154 aa).

Positions 1–27 are cleaved as a signal peptide; that stretch reads MAPARAGCCPLLLLLLGLWVAQIPVSA. His-42 acts as the Proton acceptor in catalysis. 2 disulfide bridges follow: Cys-64–Cys-118 and Cys-89–Cys-96. Residues 65-69 and Lys-90 each bind substrate; that span reads KDLNT. The active-site Proton donor is His-149.

It belongs to the pancreatic ribonuclease family.

It is found in the secreted. Functionally, has a low ribonuclease activity. The chain is Ribonuclease 8 (RNASE8) from Chlorocebus aethiops (Green monkey).